The following is a 384-amino-acid chain: Succinyl-diaminopimelate desuccinylase (384 aa).

Position 73 (His-73) interacts with Zn(2+). Asp-75 is an active-site residue. Zn(2+) is bound at residue Asp-106. Residue Glu-140 is the Proton acceptor of the active site. The Zn(2+) site is built by Glu-141, Glu-169, and His-358.

It belongs to the peptidase M20A family. DapE subfamily. In terms of assembly, homodimer. It depends on Zn(2+) as a cofactor. Requires Co(2+) as cofactor.

It carries out the reaction N-succinyl-(2S,6S)-2,6-diaminopimelate + H2O = (2S,6S)-2,6-diaminopimelate + succinate. It functions in the pathway amino-acid biosynthesis; L-lysine biosynthesis via DAP pathway; LL-2,6-diaminopimelate from (S)-tetrahydrodipicolinate (succinylase route): step 3/3. Its function is as follows. Catalyzes the hydrolysis of N-succinyl-L,L-diaminopimelic acid (SDAP), forming succinate and LL-2,6-diaminopimelate (DAP), an intermediate involved in the bacterial biosynthesis of lysine and meso-diaminopimelic acid, an essential component of bacterial cell walls. The sequence is that of Succinyl-diaminopimelate desuccinylase from Pelagibacter ubique (strain HTCC1062).